The sequence spans 269 residues: MRVALKLAYIGTEFHGSQIQPNVETVEGELFKALRNLGIIESPKSANYTCAGRTDAGVHALEQVVAFDTDKLNLAIPRVINSELTPGIWVWAHAEVPLSFDARRDAVSRHYRYVMSGKEYDISKIREASKFLLGTHDFENFSRTNGEKSTVRTIERIDARIDGELIKIDVVGNSFLWNMVRKIVTALSMIGKGVRDTDWLLQMLNPEIYEEGIESAPAYGLTLLKVNYNEKIEWIEDNYSIRRAGDQNQKRILRHRVMAEVLEELISHE.

Asp-55 acts as the Nucleophile in catalysis. Tyr-111 lines the substrate pocket.

It belongs to the tRNA pseudouridine synthase TruA family.

It carries out the reaction uridine(38/39/40) in tRNA = pseudouridine(38/39/40) in tRNA. In terms of biological role, formation of pseudouridine at positions 38, 39 and 40 in the anticodon stem and loop of transfer RNAs. This chain is tRNA pseudouridine synthase A, found in Methanosarcina barkeri (strain Fusaro / DSM 804).